The following is a 717-amino-acid chain: Trimethylamine N-oxide transport system permease protein TmoV (717 aa).

The next 17 membrane-spanning stretches (helical) occupy residues 10-30 (FFQW…IEVP), 69-89 (LPPL…FLMN), 120-140 (FMTF…ETIV), 153-173 (WAEL…ILGY), 175-195 (LSGK…SVFG), 206-226 (FILV…VMAF), 238-258 (ILLV…IVLF), 265-285 (AVII…LLGL), 319-339 (ILIG…ISAF), 355-375 (QLNI…AILL), 402-422 (ILFF…GSFY), 452-472 (IWDT…VDVL), 488-508 (LVLV…LVVG), 527-547 (LYMA…VGII), 574-594 (LIPV…AVIV), 643-663 (MLGL…GAFI), and 683-703 (GIGL…DHLI). Residues 200–379 (SMQTLSFILV…LIAILLDKMS (180 aa)) enclose the ABC transmembrane type-1 1 domain. One can recognise an ABC transmembrane type-1 2 domain in the interval 523–703 (ALVTLYMATF…FIGLIFDHLI (181 aa)).

The protein belongs to the binding-protein-dependent transport system permease family. The complex is probably composed of two ATP-binding proteins (TmoW), two transmembrane proteins (TmoV) and a solute-binding protein (TmoX).

The protein localises to the cell inner membrane. Part of the ABC transporter complex TmoXWV involved in trimethylamine N-oxide (TMAO) import. Responsible for the translocation of the substrate across the membrane. The polypeptide is Trimethylamine N-oxide transport system permease protein TmoV (Pelagibacter ubique (strain HTCC1062)).